Consider the following 389-residue polypeptide: Dual-specificity RNA methyltransferase RlmN (389 aa).

The active-site Proton acceptor is the Glu-110. The Radical SAM core domain maps to 116 to 355 (EKDRATLCVS…TIVRKTRGDD (240 aa)). Cys-123 and Cys-360 form a disulfide bridge. [4Fe-4S] cluster-binding residues include Cys-130, Cys-134, and Cys-137. S-adenosyl-L-methionine is bound by residues 184–185 (GE), Ser-216, 238–240 (SLH), and Asn-317. Catalysis depends on Cys-360, which acts as the S-methylcysteine intermediate.

The protein belongs to the radical SAM superfamily. RlmN family. The cofactor is [4Fe-4S] cluster.

Its subcellular location is the cytoplasm. The enzyme catalyses adenosine(2503) in 23S rRNA + 2 reduced [2Fe-2S]-[ferredoxin] + 2 S-adenosyl-L-methionine = 2-methyladenosine(2503) in 23S rRNA + 5'-deoxyadenosine + L-methionine + 2 oxidized [2Fe-2S]-[ferredoxin] + S-adenosyl-L-homocysteine. The catalysed reaction is adenosine(37) in tRNA + 2 reduced [2Fe-2S]-[ferredoxin] + 2 S-adenosyl-L-methionine = 2-methyladenosine(37) in tRNA + 5'-deoxyadenosine + L-methionine + 2 oxidized [2Fe-2S]-[ferredoxin] + S-adenosyl-L-homocysteine. Specifically methylates position 2 of adenine 2503 in 23S rRNA and position 2 of adenine 37 in tRNAs. m2A2503 modification seems to play a crucial role in the proofreading step occurring at the peptidyl transferase center and thus would serve to optimize ribosomal fidelity. The chain is Dual-specificity RNA methyltransferase RlmN from Erwinia tasmaniensis (strain DSM 17950 / CFBP 7177 / CIP 109463 / NCPPB 4357 / Et1/99).